The primary structure comprises 424 residues: Histidine--tRNA ligase (424 aa).

It belongs to the class-II aminoacyl-tRNA synthetase family. In terms of assembly, homodimer.

The protein localises to the cytoplasm. The enzyme catalyses tRNA(His) + L-histidine + ATP = L-histidyl-tRNA(His) + AMP + diphosphate + H(+). The chain is Histidine--tRNA ligase from Escherichia coli O127:H6 (strain E2348/69 / EPEC).